The sequence spans 565 residues: Thiol:disulfide interchange protein DsbD (565 aa).

A signal peptide spans methionine 1–alanine 19. 2 cysteine pairs are disulfide-bonded: cysteine 122-cysteine 128 and cysteine 182-cysteine 304. The next 7 helical transmembrane spans lie at leucine 163–valine 183, leucine 208–valine 228, tyrosine 243–phenylalanine 263, glycine 289–leucine 309, tryptophan 323–isoleucine 343, tryptophan 357–leucine 377, and isoleucine 384–threonine 404. One can recognise a Thioredoxin domain in the interval tryptophan 434 to proline 565. Cysteine 480 and cysteine 483 are joined by a disulfide.

Belongs to the thioredoxin family. DsbD subfamily.

Its subcellular location is the cell inner membrane. The catalysed reaction is [protein]-dithiol + NAD(+) = [protein]-disulfide + NADH + H(+). The enzyme catalyses [protein]-dithiol + NADP(+) = [protein]-disulfide + NADPH + H(+). In terms of biological role, required to facilitate the formation of correct disulfide bonds in some periplasmic proteins and for the assembly of the periplasmic c-type cytochromes. Acts by transferring electrons from cytoplasmic thioredoxin to the periplasm. This transfer involves a cascade of disulfide bond formation and reduction steps. The polypeptide is Thiol:disulfide interchange protein DsbD (Escherichia coli O6:H1 (strain CFT073 / ATCC 700928 / UPEC)).